The following is a 458-amino-acid chain: ATP synthase subunit beta (458 aa).

Residue Gly-148–Thr-155 coordinates ATP.

This sequence belongs to the ATPase alpha/beta chains family. F-type ATPases have 2 components, CF(1) - the catalytic core - and CF(0) - the membrane proton channel. CF(1) has five subunits: alpha(3), beta(3), gamma(1), delta(1), epsilon(1). CF(0) has three main subunits: a(1), b(2) and c(9-12). The alpha and beta chains form an alternating ring which encloses part of the gamma chain. CF(1) is attached to CF(0) by a central stalk formed by the gamma and epsilon chains, while a peripheral stalk is formed by the delta and b chains.

The protein resides in the cell inner membrane. The enzyme catalyses ATP + H2O + 4 H(+)(in) = ADP + phosphate + 5 H(+)(out). In terms of biological role, produces ATP from ADP in the presence of a proton gradient across the membrane. The catalytic sites are hosted primarily by the beta subunits. This Pseudomonas aeruginosa (strain LESB58) protein is ATP synthase subunit beta.